We begin with the raw amino-acid sequence, 103 residues long: Gene 56 protein (103 aa).

Positions 9 to 103 constitute a Glutaredoxin domain; it reads WDGAHVRTLF…DYYTASETGL (95 aa).

The chain is Gene 56 protein (56) from Mycobacterium phage L5 (Mycobacteriophage L5).